Consider the following 1128-residue polypeptide: Major DNA-binding protein (1128 aa).

Residues 453–466 fold into a zinc finger; sequence CELCQGTCPASCIH. Residues 1098-1128 form a required for nuclear localization region; that stretch reads QIEEFAPQATLSTLAASRKRKITSILSDIDL.

It belongs to the herpesviridae major DNA-binding protein family. As to quaternary structure, homooligomers. Forms double-helical filaments necessary for the formation of replication compartments within the host nucleus. Interacts with the origin-binding protein. Interacts with the helicase primase complex; this interaction stimulates primer synthesis activity of the helicase-primase complex. Interacts with the DNA polymerase. Interacts with the alkaline exonuclease; this interaction increases its nuclease processivity.

The protein resides in the host nucleus. Functionally, single-stranded DNA-binding protein required for DNA replication. Its function is as follows. Plays several crucial roles in viral infection. Participates in the opening of the viral DNA origin to initiate replication by interacting with the origin-binding protein. May disrupt loops, hairpins and other secondary structures present on ssDNA to reduce and eliminate pausing of viral DNA polymerase at specific sites during elongation. Promotes viral DNA recombination by performing strand-transfer, characterized by the ability to transfer a DNA strand from a linear duplex to a complementary single-stranded DNA circle. Can also catalyze the renaturation of complementary single strands. Additionally, reorganizes the host cell nucleus, leading to the formation of prereplicative sites and replication compartments. This process is driven by the protein which can form double-helical filaments in the absence of DNA. In Saimiri sciureus (Common squirrel monkey), this protein is Major DNA-binding protein.